We begin with the raw amino-acid sequence, 253 residues long: tRNA uridine(34) hydroxylase (253 aa).

Positions 127–221 (HGRPLVLLDT…YFEDVGGEGY (95 aa)) constitute a Rhodanese domain. The Cysteine persulfide intermediate role is filled by C181.

Belongs to the TrhO family.

It catalyses the reaction uridine(34) in tRNA + AH2 + O2 = 5-hydroxyuridine(34) in tRNA + A + H2O. Its function is as follows. Catalyzes oxygen-dependent 5-hydroxyuridine (ho5U) modification at position 34 in tRNAs. The polypeptide is tRNA uridine(34) hydroxylase (Xanthomonas campestris pv. campestris (strain 8004)).